Reading from the N-terminus, the 189-residue chain is Probable nicotinate-nucleotide adenylyltransferase (189 aa).

Belongs to the NadD family.

It catalyses the reaction nicotinate beta-D-ribonucleotide + ATP + H(+) = deamido-NAD(+) + diphosphate. Its pathway is cofactor biosynthesis; NAD(+) biosynthesis; deamido-NAD(+) from nicotinate D-ribonucleotide: step 1/1. Catalyzes the reversible adenylation of nicotinate mononucleotide (NaMN) to nicotinic acid adenine dinucleotide (NaAD). This chain is Probable nicotinate-nucleotide adenylyltransferase, found in Staphylococcus aureus (strain MRSA252).